The primary structure comprises 367 residues: Aurora kinase (367 aa).

Positions 30–49 (TTATNGAPPQARVQPGKGYR) are disordered. One can recognise a Protein kinase domain in the interval 109–360 (FEIGKVLGKG…LKEVKKHPWI (252 aa)). ATP is bound by residues 115 to 123 (LGKGKFGRV) and K138. D232 serves as the catalytic Proton acceptor.

This sequence belongs to the protein kinase superfamily. Ser/Thr protein kinase family. Aurora subfamily.

It localises to the nucleus. Its subcellular location is the cytoplasm. The protein localises to the cytoskeleton. It is found in the spindle. The protein resides in the chromosome. It localises to the centromere. Its subcellular location is the kinetochore. The enzyme catalyses L-seryl-[protein] + ATP = O-phospho-L-seryl-[protein] + ADP + H(+). It catalyses the reaction L-threonyl-[protein] + ATP = O-phospho-L-threonyl-[protein] + ADP + H(+). In terms of biological role, component of the chromosomal passenger complex (CPC), a complex that acts as a key regulator of chromosome segregation and cytokinesis. Has a role in error-correction of aberrent kinetochore-microtubule attachments to ensure that sister kinetochores become bioriented and connect to opposite poles by promoting spindle assembly checkpoint signaling. The polypeptide is Aurora kinase (IPL1) (Eremothecium gossypii (strain ATCC 10895 / CBS 109.51 / FGSC 9923 / NRRL Y-1056) (Yeast)).